The following is a 371-amino-acid chain: tRNA-specific 2-thiouridylase MnmA (371 aa).

ATP-binding positions include 13–20 (GMSGGVDS) and M39. Residues 99–101 (NPD) form an interaction with target base in tRNA region. C104 (nucleophile) is an active-site residue. C104 and C200 form a disulfide bridge. G128 contributes to the ATP binding site. Residues 150–152 (KDQ) form an interaction with tRNA region. The active-site Cysteine persulfide intermediate is C200. The tract at residues 308-309 (RY) is interaction with tRNA.

It belongs to the MnmA/TRMU family.

Its subcellular location is the cytoplasm. The enzyme catalyses S-sulfanyl-L-cysteinyl-[protein] + uridine(34) in tRNA + AH2 + ATP = 2-thiouridine(34) in tRNA + L-cysteinyl-[protein] + A + AMP + diphosphate + H(+). In terms of biological role, catalyzes the 2-thiolation of uridine at the wobble position (U34) of tRNA, leading to the formation of s(2)U34. The polypeptide is tRNA-specific 2-thiouridylase MnmA (Bacillus cytotoxicus (strain DSM 22905 / CIP 110041 / 391-98 / NVH 391-98)).